A 216-amino-acid polypeptide reads, in one-letter code: MSITATQVNELRKATGAGLMDCKKALTETGGDHEQAVDYLRKKGLAAASKKAGRAATEGLVGSYIHAGGKIGVLVEVNCETDFVAKNEGFQNFVKDVAMHIAAASPLYVRREEVDPSVLEREKEIYRAKAKESGKPDNIVEKIIEGQVNKFYGDICLLEQAFVKDPDKTVQTYLNETIATIGENISIRRFAKFNLGEGLEKKESDFAAEVAAAAGA.

Residues 81 to 84 (TDFV) are involved in Mg(2+) ion dislocation from EF-Tu.

This sequence belongs to the EF-Ts family.

It localises to the cytoplasm. In terms of biological role, associates with the EF-Tu.GDP complex and induces the exchange of GDP to GTP. It remains bound to the aminoacyl-tRNA.EF-Tu.GTP complex up to the GTP hydrolysis stage on the ribosome. In Geotalea daltonii (strain DSM 22248 / JCM 15807 / FRC-32) (Geobacter daltonii), this protein is Elongation factor Ts.